The sequence spans 318 residues: L-lactate dehydrogenase (318 aa).

NAD(+)-binding positions include valine 18, aspartate 39, lysine 44, tyrosine 69, and 83–84 (GA). Residues glutamine 86 and arginine 92 each contribute to the substrate site. Residues serine 105, 122–124 (VSN), and serine 147 each bind NAD(+). 124 to 127 (NPVD) lines the substrate pocket. Residue 152–155 (DTSR) participates in substrate binding. The active-site Proton acceptor is the histidine 179. Position 225 is a phosphotyrosine (tyrosine 225). Position 234 (threonine 234) interacts with substrate.

The protein belongs to the LDH/MDH superfamily. LDH family. In terms of assembly, homotetramer.

It is found in the cytoplasm. The enzyme catalyses (S)-lactate + NAD(+) = pyruvate + NADH + H(+). It participates in fermentation; pyruvate fermentation to lactate; (S)-lactate from pyruvate: step 1/1. In terms of biological role, catalyzes the conversion of lactate to pyruvate. This is L-lactate dehydrogenase from Clostridium botulinum (strain Okra / Type B1).